Reading from the N-terminus, the 293-residue chain is Adenylyl-sulfate kinase 2, chloroplastic (293 aa).

The N-terminal 59 residues, 1-59 (MEGLAIRASRPSVFCSIPGLGGDSHRKPPSDGFLKLPASSIPADSRKLVANSTSFHPIS), are a transit peptide targeting the chloroplast. 122 to 130 (GLSGSGKST) serves as a coordination point for ATP. Substrate-binding positions include aspartate 152, arginine 155, arginine 169, asparagine 172, 195–196 (IS), and glycine 245. Serine 196 (phosphoserine intermediate) is an active-site residue.

This sequence belongs to the APS kinase family. As to quaternary structure, interacts with APK1. Expressed in root vasculature, root tips, leaf epidermal cells and funiculus of developing seeds.

It is found in the plastid. Its subcellular location is the chloroplast. It catalyses the reaction adenosine 5'-phosphosulfate + ATP = 3'-phosphoadenylyl sulfate + ADP + H(+). It functions in the pathway sulfur metabolism; hydrogen sulfide biosynthesis; sulfite from sulfate: step 2/3. Its function is as follows. Catalyzes the synthesis of activated sulfate. Essential for plant reproduction and viability. Required for the production of glucosinolates. This Arabidopsis thaliana (Mouse-ear cress) protein is Adenylyl-sulfate kinase 2, chloroplastic (APK2).